Consider the following 1196-residue polypeptide: METKPKTATTIKVPPGPLGYVYARACPSEGIELLALLSARSGDADVAVAPLVVGLTVESGFEANVAVVVGSRTTGLGGTAVSLKLTPSHYSSSVYVFHGGRHLDPSTQAPNLTRLCERARRHFGFSDYTPRPGDLKHETTGEALCERLGLDPDRALLYLVVTEGFKEAVCINNTFLHLGGSDKVTIGGAEVHRIPVYPLQLFMPDFSRVIAEPFNANHRSIGENFTYPLPFFNRPLNRLLFEAVVGPAAVALRCRNVDAVARAAAHLAFDENHEGAALPADITFTAFEASQGKTPRGGRDGGGKGPAGGFEQRLASVMAGDAALALESIVSMAVFDEPPTDISAWPLCEGQDTAAARANAVGAYLARAAGLVGAMVFSTNSALHLTEVDDAGPADPKDHSKPSFYRFFLVPGTHVAANPQVDREGHVVPGFEGRPTAPLVGGTQEFAGEHLAMLCGFSPALLAKMLFYLERCDGGVIVGRQEMDVFRYVADSNQTDVPCNLCTFDTRHACVHTTLMRLRARHPKFASAARGAIGVFGTMNSMYSDCDVLGNYAAFSALKRADGSETARTIMQETYRAATERVMAELETLQYVDQAVPTAMGRLETIITNREALHTVVNNVRQVVDREVEQLMRNLVEGRNFKFRDGLGEANHAMSLTLDPYACGPCPLLQLLGRRSNLAVYQDLALSQCHGVFAGQSVEGRNFRNQFQPVLRRRVMDMFNNGFLSAKTLTVALSEGAAICAPSLTAGQTAPAESSFEGDVARVTLGFPKELRVKSRVLFAGASANASEAAKARVASLQSAYQKPDKRVDILLGPLGFLLKQFHAAIFPNGKPPGSNQPNPQWFWTALQRNQLPARLLSREDIETIAFIKKFSLDYGAINFINLAPNNVSELAMYYMANQILRYCDHSTYFINTLTAIIAGSRRPPSVQAAAAWSAQGGAGLEAGARALMDAVDAHPGAWTSMFASCNLLRPVMAARPMVVLGLSISKYYGMAGNDRVFQAGNWASLMGGKNACPLLIFDRTRKFVLACPRAGFVCAASNLGGGAHESSLCEQLRGIISEGGAAVASSVFVATVKSLGPRTQQLQIEDWLALLEDEYLSEEMMELTARALERGNGEWSTDAALEVAHEAEALVSQLGNAGEVFNFGDFGCEDDNATPFGGPGAPGPAFAGRKRAFHGDDPFGEGPPDKKGDLTLDML.

A zinc finger lies at 499-512 (CNLCTFDTRHACVH). 2 short sequence motifs (required for filament formation) span residues 843 to 844 (FW) and 1142 to 1144 (FNF). The disordered stretch occupies residues 1158–1196 (GGPGAPGPAFAGRKRAFHGDDPFGEGPPDKKGDLTLDML). Residues 1170-1196 (RKRAFHGDDPFGEGPPDKKGDLTLDML) form a required for nuclear localization region. The segment covering 1174–1196 (FHGDDPFGEGPPDKKGDLTLDML) has biased composition (basic and acidic residues).

It belongs to the herpesviridae major DNA-binding protein family. In terms of assembly, homooligomers. Forms double-helical filaments necessary for the formation of replication compartments within the host nucleus. Interacts with the origin-binding protein. Interacts with the helicase primase complex; this interaction stimulates primer synthesis activity of the helicase-primase complex. Interacts with the DNA polymerase. Interacts with the alkaline exonuclease; this interaction increases its nuclease processivity.

The protein localises to the host nucleus. Its function is as follows. Plays several crucial roles in viral infection. Participates in the opening of the viral DNA origin to initiate replication by interacting with the origin-binding protein. May disrupt loops, hairpins and other secondary structures present on ssDNA to reduce and eliminate pausing of viral DNA polymerase at specific sites during elongation. Promotes viral DNA recombination by performing strand-transfer, characterized by the ability to transfer a DNA strand from a linear duplex to a complementary single-stranded DNA circle. Can also catalyze the renaturation of complementary single strands. Additionally, reorganizes the host cell nucleus, leading to the formation of prereplicative sites and replication compartments. This process is driven by the protein which can form double-helical filaments in the absence of DNA. In Human herpesvirus 1 (strain KOS) (HHV-1), this protein is Major DNA-binding protein.